A 1014-amino-acid chain; its full sequence is EMILIN-1-A (1014 aa).

Residues M1–A27 form the signal peptide. An EMI domain is found at H53–D128. Intrachain disulfides connect C57–C118, C84–C89, and C117–C126. Disordered stretches follow at residues D125–D150 and Q811–P869. Basic and acidic residues predominate over residues H134–D150. Residues G145–R179 adopt a coiled-coil conformation. In terms of domain architecture, Collagen-like spans G815 to D865. The span at K840–R856 shows a compositional bias: low complexity. A C1q domain is found at A866 to D1012.

The protein localises to the secreted. It localises to the extracellular space. Its subcellular location is the extracellular matrix. Functionally, may be responsible for anchoring smooth muscle cells to elastic fibers, and may be involved not only in the formation of the elastic fiber, but also in the processes that regulate vessel assembly. Has cell adhesive capacity. This chain is EMILIN-1-A, found in Danio rerio (Zebrafish).